The following is a 956-amino-acid chain: Run domain Beclin-1-interacting and cysteine-rich domain-containing protein (956 aa).

The RUN domain occupies 49–190 (WSKYGGLERL…PRLLAQIDAS (142 aa)). An interaction with PIK3C3 region spans residues 50 to 181 (SKYGGLERLC…CLEAVEQNNP (132 aa)). S198 bears the Phosphoserine mark. An interaction with YWHAB region spans residues 205–437 (SQSLTALPGS…ITIIVEDPIA (233 aa)). Low complexity predominate over residues 233-242 (SLQSMPQSSH). Residues 233–423 (SLQSMPQSSH…TNIASRGAAG (191 aa)) are disordered. Residues S250 and S268 each carry the phosphoserine modification. A compositionally biased stretch (polar residues) spans 270–319 (AETQTTPAPLPSDSTLAQDSPLTAQEMSDSTLTSPLEASWVSSQNDSPSD). Residues 302-585 (TSPLEASWVS…DLEIQDADIR (284 aa)) are interaction with UVRAG. A compositionally biased stretch (low complexity) spans 339 to 371 (ASCESHSSNGESSSSHLFSSSSSQKLESAASSL). Positions 379–395 (QSQAGSVLRRSSFSEGQ) are enriched in polar residues. Phosphoserine is present on residues S390, S412, S513, and S547. Residues 490–542 (AIELMKCNMMSQCLEEEEVEEEDSDREIQELKQKIRLRRQQIRTKNLLPAYRE) form an interaction with BECN1 region. Over residues 547–566 (SFRVTSSSSQFSSRDSTQLS) the composition is skewed to low complexity. The disordered stretch occupies residues 547–579 (SFRVTSSSSQFSSRDSTQLSESGSAEDADDLEI). An interaction with CYBA region spans residues 552–609 (SSSSQFSSRDSTQLSESGSAEDADDLEIQDADIRRSAVSNGKSSFSQNLSHCFLHSTS). Positions 570 to 579 (SAEDADDLEI) are enriched in acidic residues. Position 655 is a phosphoserine (S655). Residues 656-744 (PDDGQHADIY…HENAQMVVPS (89 aa)) form an interaction with CARD9 region. Residues 705-956 (CAGCGIRTDP…ALEATVLETT (252 aa)) form an interaction with Rab7 region.

Associates with PI3K (PI3KC3/PI3K-III/class III phosphatidylinositol 3-kinase) complex II (PI3KC3-C2) in which the core composed of the catalytic subunit PIK3C3, the regulatory subunit PIK3R4 and BECN1 is associated with UVRAG; in the complex interacts directly with PI3KC3 and UVRAG. Interacts with Rab7 (RAB7A or RAB7B) (GTP-bound form); Rab7 and UVRAG compete for RUBCN binding; can interact simultaneously with Rab7 and the PI3K complex. Interacts with CYBA and CYBB; indicative for the association with the CYBA:CYBB NADPH oxidase heterodimer. Interacts with NOX4 and probably associates with the CYBA:NOX4 complex. Interacts with YWHAB and CARD9 in a competitive and stimulation-dependent manner; RUBCN exchanges interaction from YWHAB to CARD9 upon stimulation with beta-1,3-glucan.

The protein resides in the late endosome. The protein localises to the lysosome. It localises to the early endosome. Inhibits PIK3C3 activity; under basal conditions negatively regulates PI3K complex II (PI3KC3-C2) function in autophagy. Negatively regulates endosome maturation and degradative endocytic trafficking and impairs autophagosome maturation process. Can sequester UVRAG from association with a class C Vps complex (possibly the HOPS complex) and negatively regulates Rab7 activation. In terms of biological role, involved in regulation of pathogen-specific host defense of activated macrophages. Following bacterial infection promotes NADH oxidase activity by association with CYBA thereby affecting TLR2 signaling and probably other TLR-NOX pathways. Stabilizes the CYBA:CYBB NADPH oxidase heterodimer, increases its association with TLR2 and its phagosome trafficking to induce antimicrobial burst of ROS and production of inflammatory cytokines. Following fungal or viral infection (implicating CLEC7A (dectin-1)-mediated myeloid cell activation or RIGI-dependent sensing of RNA viruses) negatively regulates pro-inflammatory cytokine production by association with CARD9 and sequestering it from signaling complexes. This is Run domain Beclin-1-interacting and cysteine-rich domain-containing protein from Mus musculus (Mouse).